The chain runs to 300 residues: GTPase Era (300 aa).

The 169-residue stretch at 8 to 176 (RCGYVAIVGR…EAQIAKHLPE (169 aa)) folds into the Era-type G domain. The G1 stretch occupies residues 16 to 23 (GRPNVGKS). 16–23 (GRPNVGKS) serves as a coordination point for GTP. A G2 region spans residues 42–46 (QTTRH). Residues 63-66 (DTPG) are G3. Residues 63 to 67 (DTPGM) and 125 to 128 (NKTD) contribute to the GTP site. The segment at 125–128 (NKTD) is G4. Residues 155 to 157 (ISA) form a G5 region. The 85-residue stretch at 199 to 283 (VREKIMRQLG…MLNLWVKVKG (85 aa)) folds into the KH type-2 domain.

Belongs to the TRAFAC class TrmE-Era-EngA-EngB-Septin-like GTPase superfamily. Era GTPase family. As to quaternary structure, monomer.

The protein resides in the cytoplasm. Its subcellular location is the cell inner membrane. An essential GTPase that binds both GDP and GTP, with rapid nucleotide exchange. Plays a role in 16S rRNA processing and 30S ribosomal subunit biogenesis and possibly also in cell cycle regulation and energy metabolism. This Pseudomonas entomophila (strain L48) protein is GTPase Era.